The sequence spans 376 residues: Carbamoyl phosphate synthase small chain (376 aa).

Residues 1-183 (MENILLNKAL…IYKKKYIEKN (183 aa)) are CPSase. The L-glutamine site is built by serine 51, glycine 235, and glycine 237. One can recognise a Glutamine amidotransferase type-1 domain in the interval 187 to 374 (NIVAYDFGIK…INLVKDYRLN (188 aa)). Cysteine 263 acts as the Nucleophile in catalysis. Residues leucine 264, glutamine 267, asparagine 305, and phenylalanine 308 each contribute to the L-glutamine site. Active-site residues include histidine 347 and glutamate 349.

Belongs to the CarA family. As to quaternary structure, composed of two chains; the small (or glutamine) chain promotes the hydrolysis of glutamine to ammonia, which is used by the large (or ammonia) chain to synthesize carbamoyl phosphate. Tetramer of heterodimers (alpha,beta)4.

It catalyses the reaction hydrogencarbonate + L-glutamine + 2 ATP + H2O = carbamoyl phosphate + L-glutamate + 2 ADP + phosphate + 2 H(+). The catalysed reaction is L-glutamine + H2O = L-glutamate + NH4(+). It functions in the pathway amino-acid biosynthesis; L-arginine biosynthesis; carbamoyl phosphate from bicarbonate: step 1/1. It participates in pyrimidine metabolism; UMP biosynthesis via de novo pathway; (S)-dihydroorotate from bicarbonate: step 1/3. In terms of biological role, small subunit of the glutamine-dependent carbamoyl phosphate synthetase (CPSase). CPSase catalyzes the formation of carbamoyl phosphate from the ammonia moiety of glutamine, carbonate, and phosphate donated by ATP, constituting the first step of 2 biosynthetic pathways, one leading to arginine and/or urea and the other to pyrimidine nucleotides. The small subunit (glutamine amidotransferase) binds and cleaves glutamine to supply the large subunit with the substrate ammonia. This is Carbamoyl phosphate synthase small chain from Wigglesworthia glossinidia brevipalpis.